Consider the following 135-residue polypeptide: UPF0355 protein SE_2351 (135 aa).

The protein belongs to the UPF0355 family.

The sequence is that of UPF0355 protein SE_2351 from Staphylococcus epidermidis (strain ATCC 12228 / FDA PCI 1200).